We begin with the raw amino-acid sequence, 288 residues long: ATP synthase gamma chain (288 aa).

Belongs to the ATPase gamma chain family. In terms of assembly, F-type ATPases have 2 components, CF(1) - the catalytic core - and CF(0) - the membrane proton channel. CF(1) has five subunits: alpha(3), beta(3), gamma(1), delta(1), epsilon(1). CF(0) has three main subunits: a, b and c.

It localises to the cell membrane. Produces ATP from ADP in the presence of a proton gradient across the membrane. The gamma chain is believed to be important in regulating ATPase activity and the flow of protons through the CF(0) complex. This is ATP synthase gamma chain from Shouchella clausii (strain KSM-K16) (Alkalihalobacillus clausii).